The primary structure comprises 223 residues: Ribonuclease HII (223 aa).

The RNase H type-2 domain maps to 1–219 (MMIAGIDEAG…VENIREELEK (219 aa)). Residues Asp-7, Glu-8, and Asp-105 each coordinate a divalent metal cation.

Belongs to the RNase HII family. It depends on Mn(2+) as a cofactor. Requires Mg(2+) as cofactor.

It localises to the cytoplasm. The enzyme catalyses Endonucleolytic cleavage to 5'-phosphomonoester.. Functionally, endonuclease that specifically degrades the RNA of RNA-DNA hybrids. In Methanosarcina acetivorans (strain ATCC 35395 / DSM 2834 / JCM 12185 / C2A), this protein is Ribonuclease HII.